The sequence spans 142 residues: MADPARARKLADRIKVIVAERLDRGLRDPRLGFVTITDVQVTGDLQHATVFYTVYGTDQERADTAAALTAATGMLRSEVGKNITARLTPTLQFQLDAIPENAAHIEDLLRQARDHDTEVAGLAEGAAYAGEQDPYVKPREAN.

It belongs to the RbfA family. In terms of assembly, monomer. Binds 30S ribosomal subunits, but not 50S ribosomal subunits or 70S ribosomes.

The protein localises to the cytoplasm. Functionally, one of several proteins that assist in the late maturation steps of the functional core of the 30S ribosomal subunit. Associates with free 30S ribosomal subunits (but not with 30S subunits that are part of 70S ribosomes or polysomes). Required for efficient processing of 16S rRNA. May interact with the 5'-terminal helix region of 16S rRNA. The protein is Ribosome-binding factor A of Leifsonia xyli subsp. xyli (strain CTCB07).